A 21-amino-acid chain; its full sequence is Pseudogermin (21 aa).

Belongs to the germin family. In terms of assembly, homotetramer.

The protein localises to the secreted. It is found in the extracellular space. It localises to the apoplast. The protein resides in the cell wall. May subsume the role of germin at the low water potentials during embryogenesis. The polypeptide is Pseudogermin (Triticum aestivum (Wheat)).